A 265-amino-acid chain; its full sequence is Hydroxyethylthiazole kinase (265 aa).

Position 50 (Met-50) interacts with substrate. Residues Arg-125 and Thr-171 each contribute to the ATP site. Gly-198 provides a ligand contact to substrate.

This sequence belongs to the Thz kinase family. Mg(2+) serves as cofactor.

The enzyme catalyses 5-(2-hydroxyethyl)-4-methylthiazole + ATP = 4-methyl-5-(2-phosphooxyethyl)-thiazole + ADP + H(+). Its pathway is cofactor biosynthesis; thiamine diphosphate biosynthesis; 4-methyl-5-(2-phosphoethyl)-thiazole from 5-(2-hydroxyethyl)-4-methylthiazole: step 1/1. In terms of biological role, catalyzes the phosphorylation of the hydroxyl group of 4-methyl-5-beta-hydroxyethylthiazole (THZ). This chain is Hydroxyethylthiazole kinase, found in Salmonella schwarzengrund (strain CVM19633).